The sequence spans 948 residues: UvrABC system protein A (948 aa).

Residue 42-49 (GLSGSGKS) coordinates ATP. The segment at 262-289 (CPVCSYSLPELEPRLFSFNNPMGSCPTC) adopts a C4-type zinc-finger fold. ABC transporter domains lie at 319–596 (WDKR…ENSV) and 616–945 (VNPG…KYLK). 649 to 656 (GVSGSGKS) contributes to the ATP binding site. A C4-type zinc finger spans residues 748-774 (CEACQGDGVIKVEMHFLPDVYVPCEVC).

This sequence belongs to the ABC transporter superfamily. UvrA family. In terms of assembly, forms a heterotetramer with UvrB during the search for lesions.

It localises to the cytoplasm. Functionally, the UvrABC repair system catalyzes the recognition and processing of DNA lesions. UvrA is an ATPase and a DNA-binding protein. A damage recognition complex composed of 2 UvrA and 2 UvrB subunits scans DNA for abnormalities. When the presence of a lesion has been verified by UvrB, the UvrA molecules dissociate. The polypeptide is UvrABC system protein A (Neisseria meningitidis serogroup A / serotype 4A (strain DSM 15465 / Z2491)).